Consider the following 490-residue polypeptide: UDP-N-acetylmuramoyl-L-alanyl-D-glutamate--2,6-diaminopimelate ligase (490 aa).

Position 31 (Ser-31) interacts with UDP-N-acetyl-alpha-D-muramoyl-L-alanyl-D-glutamate. 109–115 (GTNGKTS) contributes to the ATP binding site. UDP-N-acetyl-alpha-D-muramoyl-L-alanyl-D-glutamate-binding positions include Asn-150, 151–152 (TT), Ser-178, and Arg-186. At Lys-218 the chain carries N6-carboxylysine. Meso-2,6-diaminopimelate-binding positions include Arg-384, 408–411 (DNPR), Gly-458, and Glu-462. The Meso-diaminopimelate recognition motif signature appears at 408–411 (DNPR).

Belongs to the MurCDEF family. MurE subfamily. Requires Mg(2+) as cofactor. Post-translationally, carboxylation is probably crucial for Mg(2+) binding and, consequently, for the gamma-phosphate positioning of ATP.

The protein resides in the cytoplasm. The enzyme catalyses UDP-N-acetyl-alpha-D-muramoyl-L-alanyl-D-glutamate + meso-2,6-diaminopimelate + ATP = UDP-N-acetyl-alpha-D-muramoyl-L-alanyl-gamma-D-glutamyl-meso-2,6-diaminopimelate + ADP + phosphate + H(+). It functions in the pathway cell wall biogenesis; peptidoglycan biosynthesis. Functionally, catalyzes the addition of meso-diaminopimelic acid to the nucleotide precursor UDP-N-acetylmuramoyl-L-alanyl-D-glutamate (UMAG) in the biosynthesis of bacterial cell-wall peptidoglycan. This chain is UDP-N-acetylmuramoyl-L-alanyl-D-glutamate--2,6-diaminopimelate ligase, found in Bacillus velezensis (strain DSM 23117 / BGSC 10A6 / LMG 26770 / FZB42) (Bacillus amyloliquefaciens subsp. plantarum).